Reading from the N-terminus, the 336-residue chain is ATP-dependent 6-phosphofructokinase 3 (336 aa).

ATP-binding positions include glycine 10, 72–73, and 108–111; these read RE and GNGT. Position 109 (asparagine 109) interacts with Mg(2+). Substrate-binding positions include 131 to 133, arginine 168, 175 to 177, glutamate 228, arginine 255, and 261 to 264; these read TID, MGH, and YIQR. Catalysis depends on aspartate 133, which acts as the Proton acceptor.

The protein belongs to the phosphofructokinase type A (PFKA) family. Mixed-substrate PFK group III subfamily. Homodimer or homotetramer. Mg(2+) serves as cofactor.

It localises to the cytoplasm. The enzyme catalyses beta-D-fructose 6-phosphate + ATP = beta-D-fructose 1,6-bisphosphate + ADP + H(+). Its pathway is carbohydrate degradation; glycolysis; D-glyceraldehyde 3-phosphate and glycerone phosphate from D-glucose: step 3/4. Its function is as follows. Catalyzes the phosphorylation of D-fructose 6-phosphate to fructose 1,6-bisphosphate by ATP, the first committing step of glycolysis. The chain is ATP-dependent 6-phosphofructokinase 3 from Bacteroides thetaiotaomicron (strain ATCC 29148 / DSM 2079 / JCM 5827 / CCUG 10774 / NCTC 10582 / VPI-5482 / E50).